Reading from the N-terminus, the 536-residue chain is Probable cytochrome P450 318a1 (536 aa).

A compositionally biased stretch (basic and acidic residues) spans Glu-439–Arg-457. The tract at residues Glu-439 to Asp-460 is disordered. Cys-477 contacts heme.

The protein belongs to the cytochrome P450 family. Heme serves as cofactor.

It is found in the endoplasmic reticulum membrane. The protein localises to the microsome membrane. Its function is as follows. May be involved in the metabolism of insect hormones and in the breakdown of synthetic insecticides. The sequence is that of Probable cytochrome P450 318a1 (Cyp318a1) from Drosophila melanogaster (Fruit fly).